The primary structure comprises 302 residues: MEPGPDGPAASGPAAIREGWFRETCSLWPGQALSLQVEQLLHHRRSRYQDILVFRSKTYGNVLVLDGVIQCTERDEFSYQEMIANLPLCSHPNPRKVLIIGGGDGGVLREVVKHPSVESVVQCEIDEDVIQVSKKFLPGMAIGYSSSKLTLHVGDGFEFMKQNQDAFDVIITDSSDPMGPAESLFKESYYQLMKTALKEDGVLCCQGECQWLHLDLIKEMRQFCQSLFPVVAYAYCTIPTYPSGQIGFMLCSKNPSTNFQEPVQPLTQQQVAQMQLKYYNSDVHRAAFVLPEFARKALNDVS.

Met-1 carries the N-acetylmethionine modification. Residues 18-253 (EGWFRETCSL…GQIGFMLCSK (236 aa)) form the PABS domain. S-adenosyl 3-(methylsulfanyl)propylamine is bound at residue Gln-49. Tyr-79 is a binding site for putrescine. Residues Gln-80, Asp-104, Glu-124, 155-156 (DG), and Asp-173 contribute to the S-adenosyl 3-(methylsulfanyl)propylamine site. Residue Asp-173 is the Proton acceptor of the active site. Putrescine is bound by residues 173 to 176 (DSSD) and Tyr-241.

This sequence belongs to the spermidine/spermine synthase family. In terms of assembly, homodimer or homotetramer.

It catalyses the reaction S-adenosyl 3-(methylsulfanyl)propylamine + putrescine = S-methyl-5'-thioadenosine + spermidine + H(+). The protein operates within amine and polyamine biosynthesis; spermidine biosynthesis; spermidine from putrescine: step 1/1. The activity is thought to be regulated mainly by the availability of decarboxylated S-adenosylmethionine. Functionally, catalyzes the production of spermidine from putrescine and decarboxylated S-adenosylmethionine (dcSAM). Has a strong preference for putrescine as substrate, and has very low activity towards 1,3-diaminopropane. Has extremely low activity towards spermidine. This is Spermidine synthase (SRM) from Homo sapiens (Human).